Consider the following 552-residue polypeptide: Putative transport protein HSM_0534 (552 aa).

Helical transmembrane passes span 4 to 24, 28 to 48, 67 to 87, 95 to 115, and 157 to 177; these read IAIT…IGHW, GVGL…HFMN, LILF…ASLL, GLAT…YKVV, and MAYA…MWLI. RCK C-terminal domains are found at residues 190-275 and 277-360; these read KQFQ…VIGE and IDMP…IIGN. A run of 6 helical transmembrane segments spans residues 370 to 390, 402 to 424, 438 to 458, 463 to 483, 495 to 515, and 529 to 549; these read MLPV…PFYI, AGGP…LYWF, IVLF…DTLV, LEWM…TGII, LCGL…ANAI, and VYPL…ILLW.

The protein belongs to the AAE transporter (TC 2.A.81) family. YidE subfamily.

The protein localises to the cell membrane. This Histophilus somni (strain 2336) (Haemophilus somnus) protein is Putative transport protein HSM_0534.